The chain runs to 320 residues: Cytochrome f (320 aa).

The first 35 residues, methionine 1–alanine 35, serve as a signal peptide directing secretion. Heme is bound by residues tyrosine 36, cysteine 56, cysteine 59, and histidine 60. A helical transmembrane segment spans residues isoleucine 286 to lysine 306.

The protein belongs to the cytochrome f family. In terms of assembly, the 4 large subunits of the cytochrome b6-f complex are cytochrome b6, subunit IV (17 kDa polypeptide, petD), cytochrome f and the Rieske protein, while the 4 small subunits are PetG, PetL, PetM and PetN. The complex functions as a dimer. Heme is required as a cofactor.

It is found in the plastid. It localises to the chloroplast thylakoid membrane. In terms of biological role, component of the cytochrome b6-f complex, which mediates electron transfer between photosystem II (PSII) and photosystem I (PSI), cyclic electron flow around PSI, and state transitions. This Welwitschia mirabilis (Tree tumbo) protein is Cytochrome f.